We begin with the raw amino-acid sequence, 132 residues long: Fatty acid-binding protein 9 (132 aa).

Phosphoserine is present on residues Ser-13, Ser-14, Ser-44, and Ser-91.

It belongs to the calycin superfamily. Fatty-acid binding protein (FABP) family.

It localises to the cytoplasm. The protein is Fatty acid-binding protein 9 (FABP9) of Homo sapiens (Human).